We begin with the raw amino-acid sequence, 371 residues long: Queuine tRNA-ribosyltransferase (371 aa).

D90 functions as the Proton acceptor in the catalytic mechanism. Residues 90 to 94, D144, Q188, and G215 each bind substrate; that span reads DSGGF. The segment at 246-252 is RNA binding; the sequence is GVGTPED. The active-site Nucleophile is D265. The RNA binding; important for wobble base 34 recognition stretch occupies residues 270–274; that stretch reads TRNAR. Zn(2+)-binding residues include C303, C305, C308, and H334.

Belongs to the queuine tRNA-ribosyltransferase family. As to quaternary structure, homodimer. Within each dimer, one monomer is responsible for RNA recognition and catalysis, while the other monomer binds to the replacement base PreQ1. Zn(2+) serves as cofactor.

It catalyses the reaction 7-aminomethyl-7-carbaguanine + guanosine(34) in tRNA = 7-aminomethyl-7-carbaguanosine(34) in tRNA + guanine. Its pathway is tRNA modification; tRNA-queuosine biosynthesis. Functionally, catalyzes the base-exchange of a guanine (G) residue with the queuine precursor 7-aminomethyl-7-deazaguanine (PreQ1) at position 34 (anticodon wobble position) in tRNAs with GU(N) anticodons (tRNA-Asp, -Asn, -His and -Tyr). Catalysis occurs through a double-displacement mechanism. The nucleophile active site attacks the C1' of nucleotide 34 to detach the guanine base from the RNA, forming a covalent enzyme-RNA intermediate. The proton acceptor active site deprotonates the incoming PreQ1, allowing a nucleophilic attack on the C1' of the ribose to form the product. After dissociation, two additional enzymatic reactions on the tRNA convert PreQ1 to queuine (Q), resulting in the hypermodified nucleoside queuosine (7-(((4,5-cis-dihydroxy-2-cyclopenten-1-yl)amino)methyl)-7-deazaguanosine). The chain is Queuine tRNA-ribosyltransferase from Neisseria gonorrhoeae (strain NCCP11945).